Consider the following 230-residue polypeptide: 5'-methylthioadenosine/S-adenosylhomocysteine nucleosidase (230 aa).

The Proton acceptor role is filled by glutamate 12. Substrate-binding positions include glycine 78, isoleucine 153, and 174-175 (ME). Aspartate 198 serves as the catalytic Proton donor.

This sequence belongs to the PNP/UDP phosphorylase family. MtnN subfamily.

The catalysed reaction is S-adenosyl-L-homocysteine + H2O = S-(5-deoxy-D-ribos-5-yl)-L-homocysteine + adenine. It carries out the reaction S-methyl-5'-thioadenosine + H2O = 5-(methylsulfanyl)-D-ribose + adenine. The enzyme catalyses 5'-deoxyadenosine + H2O = 5-deoxy-D-ribose + adenine. It participates in amino-acid biosynthesis; L-methionine biosynthesis via salvage pathway; S-methyl-5-thio-alpha-D-ribose 1-phosphate from S-methyl-5'-thioadenosine (hydrolase route): step 1/2. Functionally, catalyzes the irreversible cleavage of the glycosidic bond in both 5'-methylthioadenosine (MTA) and S-adenosylhomocysteine (SAH/AdoHcy) to adenine and the corresponding thioribose, 5'-methylthioribose and S-ribosylhomocysteine, respectively. Also cleaves 5'-deoxyadenosine, a toxic by-product of radical S-adenosylmethionine (SAM) enzymes, into 5-deoxyribose and adenine. The chain is 5'-methylthioadenosine/S-adenosylhomocysteine nucleosidase from Shewanella loihica (strain ATCC BAA-1088 / PV-4).